The following is a 180-amino-acid chain: Putative manganese efflux pump MntP (180 aa).

The next 6 membrane-spanning stretches (helical) occupy residues 6 to 26 (LMALAVALGTDALSLSVGIGL), 34 to 54 (ILQISATVLLFHIFMPLTGWL), 67 to 87 (AAVIGSLLLVGLGVKMIWAAW), 102 to 122 (FWGLLLLGASVSMDALSAGFT), 131 to 151 (LLAAGVIGLVAGAMTAGGLVF), and 160 to 180 (GERAQLLGGLILVGIGIKLFF).

This sequence belongs to the MntP (TC 9.B.29) family.

Its subcellular location is the cell membrane. Functionally, probably functions as a manganese efflux pump. The chain is Putative manganese efflux pump MntP from Pelotomaculum thermopropionicum (strain DSM 13744 / JCM 10971 / SI).